Reading from the N-terminus, the 336-residue chain is Cinnamoyl-CoA reductase 2 (336 aa).

NADP(+) is bound by residues Gly21–Ala27, Arg46, Lys52, Asp72–Leu73, Thr92–Ser94, Tyr165, Lys169, Pro192–Val195, and Ser207. The cysteines at positions 158 and 166 are disulfide-linked. The active-site Proton donor is the Lys169.

This sequence belongs to the NAD(P)-dependent epimerase/dehydratase family. Dihydroflavonol-4-reductase subfamily. In terms of processing, the formation of a reversible disulfide bond reduces activity by perturbing the positioning of nearby catalytic residues. Mainly expressed in roots and stems, especially at the second internode and, to a lower extent, in leaves and flowers. Localized in vascular elements, with weaker expression in the interfascicular (xylem fiber) region.

The protein localises to the cytoplasm. It carries out the reaction (E)-coniferaldehyde + NADP(+) + CoA = (E)-feruloyl-CoA + NADPH + H(+). The catalysed reaction is (E)-4-coumaraldehyde + NADP(+) + CoA = (E)-4-coumaroyl-CoA + NADPH + H(+). It catalyses the reaction (E)-sinapaldehyde + NADP(+) + CoA = (E)-sinapoyl-CoA + NADPH + H(+). The enzyme catalyses (E)-cinnamaldehyde + NADP(+) + CoA = (E)-cinnamoyl-CoA + NADPH + H(+). It carries out the reaction (E)-caffeyl aldehyde + NADP(+) + CoA = (E)-caffeoyl-CoA + NADPH + H(+). It functions in the pathway aromatic compound metabolism; phenylpropanoid biosynthesis. Its function is as follows. Involved in the latter stages of lignin biosynthesis. Catalyzes one of the last steps of monolignol biosynthesis, the conversion of cinnamoyl-CoAs into their corresponding cinnamaldehydes. Mediates the conversion of caffeoyl-CoA and coumaroyl-CoA to caffaldehyde and coumaraldehyde, respectively. Also active, with a lower efficiency, toward feruloyl-CoA and sinapoyl-CoA. Involved in the production of floral volatile phenylpropanoids in flowers of fragrant cultivars from cinnamic acid, a common precursor with the anthocyanin biosynthesis pathway involved in flower pigmentation. This chain is Cinnamoyl-CoA reductase 2, found in Medicago truncatula (Barrel medic).